The sequence spans 374 residues: Queuine tRNA-ribosyltransferase (374 aa).

Aspartate 91 acts as the Proton acceptor in catalysis. Residues 91–95 (DSGGY), aspartate 145, glutamine 189, and glycine 216 contribute to the substrate site. Positions 247-253 (GVGTVPD) are RNA binding. The Nucleophile role is filled by aspartate 266. The segment at 271 to 275 (TRNAR) is RNA binding; important for wobble base 34 recognition. 4 residues coordinate Zn(2+): cysteine 304, cysteine 306, cysteine 309, and histidine 335.

The protein belongs to the queuine tRNA-ribosyltransferase family. As to quaternary structure, homodimer. Within each dimer, one monomer is responsible for RNA recognition and catalysis, while the other monomer binds to the replacement base PreQ1. Zn(2+) is required as a cofactor.

The enzyme catalyses 7-aminomethyl-7-carbaguanine + guanosine(34) in tRNA = 7-aminomethyl-7-carbaguanosine(34) in tRNA + guanine. It participates in tRNA modification; tRNA-queuosine biosynthesis. Catalyzes the base-exchange of a guanine (G) residue with the queuine precursor 7-aminomethyl-7-deazaguanine (PreQ1) at position 34 (anticodon wobble position) in tRNAs with GU(N) anticodons (tRNA-Asp, -Asn, -His and -Tyr). Catalysis occurs through a double-displacement mechanism. The nucleophile active site attacks the C1' of nucleotide 34 to detach the guanine base from the RNA, forming a covalent enzyme-RNA intermediate. The proton acceptor active site deprotonates the incoming PreQ1, allowing a nucleophilic attack on the C1' of the ribose to form the product. After dissociation, two additional enzymatic reactions on the tRNA convert PreQ1 to queuine (Q), resulting in the hypermodified nucleoside queuosine (7-(((4,5-cis-dihydroxy-2-cyclopenten-1-yl)amino)methyl)-7-deazaguanosine). This chain is Queuine tRNA-ribosyltransferase, found in Leptospira interrogans serogroup Icterohaemorrhagiae serovar Lai (strain 56601).